The sequence spans 550 residues: Major fimbrium tip subunit FimE (550 aa).

The N-terminal stretch at 1 to 21 is a signal peptide; it reads MKSKSIIAQLLYVLIAFMAVS. A lipid anchor (N-palmitoyl cysteine) is attached at cysteine 22. Cysteine 22 carries the S-diacylglycerol cysteine lipid modification. The propeptide occupies 22–51; sequence CVADKSEPCPSGEPTRVSGSIVSLEHHGLR.

It belongs to the FimE family. Fimbriae are composed of a major, structural subunit and the minor components FimC, FimD and FimE. Identified in a complex composed of FimC, FimD and FimE (in vitro). Does not directly interact with host proteins, but only as a complex with FimC and FimD.

It is found in the fimbrium. Its subcellular location is the cell outer membrane. Its function is as follows. Probably a component of the fimbrium tip; required for incorporation of FimC and FimD into fimbriae. These long, filamentous pili are attached to the cell surface; they mediate biofilm formation, adhesion onto host cells and onto other bacteria that are part of the oral microbiome. They play an important role in invasion of periodontal tissues and are major virulence factors. FimC, FimD and FimE contribute to interaction with host CXCR4 and thereby down-regulate the TLR2-mediated host immune response. The chain is Major fimbrium tip subunit FimE from Porphyromonas gingivalis (strain ATCC 33277 / DSM 20709 / CIP 103683 / JCM 12257 / NCTC 11834 / 2561).